The sequence spans 526 residues: Nitrogenase iron-iron protein alpha chain (526 aa).

Positions 49, 75, and 138 each coordinate [8Fe-7S] cluster. Positions 257 and 423 each coordinate [8Fe-9S-C-homocitryl] cluster. A disordered region spans residues 507-526 (RNQPMPPSRKLRDAVQPAAE).

This sequence belongs to the NifD/NifK/NifE/NifN family. Hexamer of two alpha, two beta, and two delta chains. [8Fe-7S] cluster is required as a cofactor. Requires [8Fe-9S-C-homocitryl] cluster as cofactor.

It catalyses the reaction N2 + 8 reduced [2Fe-2S]-[ferredoxin] + 16 ATP + 16 H2O = H2 + 8 oxidized [2Fe-2S]-[ferredoxin] + 2 NH4(+) + 16 ADP + 16 phosphate + 6 H(+). Its function is as follows. This iron-iron protein is part of the nitrogenase complex that catalyzes the key enzymatic reactions in nitrogen fixation. Other nitrogenase complexes utilize a molybdenum-iron protein or a vanadium-iron protein. This chain is Nitrogenase iron-iron protein alpha chain (anfD), found in Rhodobacter capsulatus (Rhodopseudomonas capsulata).